The following is a 406-amino-acid chain: [Pyruvate dehydrogenase (acetyl-transferring)] kinase isozyme 3, mitochondrial (406 aa).

Residues 131 to 362 (IEYKEKFGFD…DAVIYLKALS (232 aa)) enclose the Histidine kinase domain. Position 247–254 (247–254 (ELFKNSMR)) interacts with ATP. Lys278 bears the N6-succinyllysine mark. ATP is bound by residues Asp287, 306-307 (ST), and 323-328 (GFGYGL). Residues 383 to 406 (TPEADDWSNPSSEPRDASKYKAKQ) form a disordered region. Over residues 395–406 (EPRDASKYKAKQ) the composition is skewed to basic and acidic residues.

Belongs to the PDK/BCKDK protein kinase family. As to quaternary structure, homodimer. Interacts with the pyruvate dehydrogenase complex subunit DLAT, and is part of the multimeric pyruvate dehydrogenase complex that contains multiple copies of pyruvate dehydrogenase (E1), dihydrolipoamide acetyltransferase (DLAT, E2) and lipoamide dehydrogenase (DLD, E3). In terms of tissue distribution, expressed in heart, skeletal muscle, spinal cord, as well as fetal and adult brain.

It is found in the mitochondrion matrix. It carries out the reaction L-seryl-[pyruvate dehydrogenase E1 alpha subunit] + ATP = O-phospho-L-seryl-[pyruvate dehydrogenase E1 alpha subunit] + ADP + H(+). Activated by interaction with DLAT. Inhibited by AZD7545, dichloroacetate and radicicol. In terms of biological role, inhibits pyruvate dehydrogenase activity by phosphorylation of the E1 subunit PDHA1, and thereby regulates glucose metabolism and aerobic respiration. Can also phosphorylate PDHA2. Decreases glucose utilization and increases fat metabolism in response to prolonged fasting, and as adaptation to a high-fat diet. Plays a role in glucose homeostasis and in maintaining normal blood glucose levels in function of nutrient levels and under starvation. Plays a role in the generation of reactive oxygen species. The chain is [Pyruvate dehydrogenase (acetyl-transferring)] kinase isozyme 3, mitochondrial (PDK3) from Homo sapiens (Human).